A 218-amino-acid polypeptide reads, in one-letter code: Cytochrome b6 (218 aa).

The helical transmembrane segment at 35 to 55 (IFYCLGGITLVCFLIQFATGF) threads the bilayer. C38 lines the heme c pocket. The heme b site is built by H89 and H103. The next 3 membrane-spanning stretches (helical) occupy residues 93-113 (ASMM…TGGF), 119-139 (LTWV…VTGY), and 189-209 (LHTF…FLMI). H190 and H205 together coordinate heme b.

The protein belongs to the cytochrome b family. PetB subfamily. As to quaternary structure, the 4 large subunits of the cytochrome b6-f complex are cytochrome b6, subunit IV (17 kDa polypeptide, PetD), cytochrome f and the Rieske protein, while the 4 small subunits are PetG, PetL, PetM and PetN. The complex functions as a dimer. Heme b serves as cofactor. The cofactor is heme c.

The protein localises to the cellular thylakoid membrane. Its function is as follows. Component of the cytochrome b6-f complex, which mediates electron transfer between photosystem II (PSII) and photosystem I (PSI), cyclic electron flow around PSI, and state transitions. The chain is Cytochrome b6 from Synechococcus sp. (strain CC9311).